A 193-amino-acid chain; its full sequence is Large ribosomal subunit protein uL5 (193 aa).

Belongs to the universal ribosomal protein uL5 family. As to quaternary structure, part of the 50S ribosomal subunit; part of the 5S rRNA/L5/L18/L25 subcomplex. Contacts the 5S rRNA and the P site tRNA. Forms a bridge to the 30S subunit in the 70S ribosome.

In terms of biological role, this is one of the proteins that bind and probably mediate the attachment of the 5S RNA into the large ribosomal subunit, where it forms part of the central protuberance. In the 70S ribosome it contacts protein S13 of the 30S subunit (bridge B1b), connecting the 2 subunits; this bridge is implicated in subunit movement. Contacts the P site tRNA; the 5S rRNA and some of its associated proteins might help stabilize positioning of ribosome-bound tRNAs. This chain is Large ribosomal subunit protein uL5, found in Novosphingobium aromaticivorans (strain ATCC 700278 / DSM 12444 / CCUG 56034 / CIP 105152 / NBRC 16084 / F199).